The chain runs to 246 residues: Exosome complex component Rrp41 (246 aa).

It belongs to the RNase PH family. Rrp41 subfamily. As to quaternary structure, component of the archaeal exosome complex. Forms a hexameric ring-like arrangement composed of 3 Rrp41-Rrp42 heterodimers. The hexameric ring associates with a trimer of Rrp4 and/or Csl4 subunits.

The protein resides in the cytoplasm. Its function is as follows. Catalytic component of the exosome, which is a complex involved in RNA degradation. Has 3'-&gt;5' exoribonuclease activity. Can also synthesize heteromeric RNA-tails. The sequence is that of Exosome complex component Rrp41 from Pyrobaculum islandicum (strain DSM 4184 / JCM 9189 / GEO3).